We begin with the raw amino-acid sequence, 301 residues long: Mitochondrial ornithine transporter 1 (301 aa).

Helical transmembrane passes span Pro5–Leu25, Ser68–Cys88, Ala110–Val130, Gly168–Phe188, Leu207–Val227, and Ile237–Val257. Solcar repeat units lie at residues Ile7–Val91, Leu104–Phe197, and Leu207–Leu293.

The protein belongs to the mitochondrial carrier (TC 2.A.29) family. In terms of tissue distribution, widely expressed, with highest levels in the liver, testis and kidney. In the brain, expressed at high levels in the hypothalamus.

It is found in the mitochondrion inner membrane. The protein localises to the mitochondrion membrane. It catalyses the reaction L-citrulline(in) + L-ornithine(out) + H(+)(in) = L-citrulline(out) + L-ornithine(in) + H(+)(out). The catalysed reaction is L-ornithine(in) + L-arginine(out) = L-ornithine(out) + L-arginine(in). The enzyme catalyses L-ornithine(out) + L-lysine(in) = L-ornithine(in) + L-lysine(out). It carries out the reaction L-lysine(out) + H(+)(in) = L-lysine(in) + H(+)(out). It catalyses the reaction L-ornithine(out) + H(+)(in) = L-ornithine(in) + H(+)(out). Its activity is regulated as follows. Inhibited by pyridoxal 5'-phosphate as well as by mercurials (mersalyl, p-chloromercuribenzene sulfonate, and mercuric chloride), N-ethylmaleimide and spermine. Its function is as follows. Mitochondrial ornithine-citrulline antiporter. Catalyzes the exchange between cytosolic ornithine and mitochondrial citrulline plus an H(+), the proton compensates the positive charge of ornithine thus leading to an electroneutral transport. Plays a crucial role in the urea cycle, by connecting the cytosolic and the intramitochondrial reactions of the urea cycle. Lysine and arginine are also transported by the antiport mechanism. In addition, catalyzes an electroneutral exchange of ornithine or lysine for H(+), a reaction driven by the pH gradient across the inner membrane. In Mus musculus (Mouse), this protein is Mitochondrial ornithine transporter 1.